Reading from the N-terminus, the 229-residue chain is Galactonate operon transcriptional repressor (229 aa).

Positions 1–71 constitute an HTH gntR-type domain; it reads MTLNKTDRIV…RYRGAFVAPR (71 aa). A DNA-binding region (H-T-H motif) is located at residues 31–50; that stretch reads EAELCEEFATSRNIIREVFR. 3 residues coordinate Zn(2+): aspartate 146, histidine 150, and histidine 195.

As to quaternary structure, homodimer.

D-galactonate binds DgoR and induces a conformational change in the protein, which decreases its affinity for DNA and consequently derepresses transcription of the dgoRKADT operon. In terms of biological role, involved in the regulation of D-galactonate metabolism. Represses the expression of the dgoRKADT operon by binding to two closely spaced inverted repeats in the cis-acting element, which overlap with the D-galactonate responsive dgo promoter. Employs a derepression mechanism using D-galactonate as a specific effector molecule. The protein is Galactonate operon transcriptional repressor of Escherichia coli (strain K12).